A 1032-amino-acid chain; its full sequence is Chitin synthase 8 (1032 aa).

2 stretches are compositionally biased toward pro residues: residues 1-11 and 26-41; these read MRPGDIYPPPQ and PPQP…PPQQ. Residues 1 to 220 are disordered; that stretch reads MRPGDIYPPP…DDDMNDSHPL (220 aa). 3 stretches are compositionally biased toward polar residues: residues 65–78, 98–107, and 143–160; these read MSPT…SRYN, LPTQSLSPFN, and TNPS…SYSY. Asparagine 78 is a glycosylation site (N-linked (GlcNAc...) asparagine). The span at 176 to 188 shows a compositional bias: low complexity; it reads PHHSSQSSVSSIP. N-linked (GlcNAc...) asparagine glycans are attached at residues asparagine 215, asparagine 304, asparagine 473, asparagine 545, and asparagine 691. 7 helical membrane-spanning segments follow: residues 728-748, 762-782, 796-816, 842-862, 870-890, 972-992, and 995-1015; these read TLNM…FFVL, VNIP…LLSL, SMVG…FLAV, IVIS…MALE, FFQY…YAFC, VLLV…QASG, and NSLA…LAFF.

The protein belongs to the chitin synthase family.

The protein localises to the cell membrane. The enzyme catalyses [(1-&gt;4)-N-acetyl-beta-D-glucosaminyl](n) + UDP-N-acetyl-alpha-D-glucosamine = [(1-&gt;4)-N-acetyl-beta-D-glucosaminyl](n+1) + UDP + H(+). Its function is as follows. Polymerizes chitin, a structural polymer of the cell wall and septum, by transferring the sugar moiety of UDP-GlcNAc to the non-reducing end of the growing chitin polymer. This chain is Chitin synthase 8, found in Cryptococcus neoformans var. grubii serotype A (strain H99 / ATCC 208821 / CBS 10515 / FGSC 9487) (Filobasidiella neoformans var. grubii).